Reading from the N-terminus, the 226-residue chain is PKHD-type hydroxylase Pput_0892 (226 aa).

The 101-residue stretch at 78–178 (KVFPPLINCY…RYAAFFWTQS (101 aa)) folds into the Fe2OG dioxygenase domain. Residues His-96, Asp-98, and His-159 each contribute to the Fe cation site. Arg-169 is a binding site for 2-oxoglutarate.

Fe(2+) serves as cofactor. Requires L-ascorbate as cofactor.

The polypeptide is PKHD-type hydroxylase Pput_0892 (Pseudomonas putida (strain ATCC 700007 / DSM 6899 / JCM 31910 / BCRC 17059 / LMG 24140 / F1)).